A 499-amino-acid chain; its full sequence is Low-affinity inorganic phosphate transporter PitA (499 aa).

Residues 1-4 (MLHL) lie on the Periplasmic side of the membrane. The helical transmembrane segment at 5–25 (FAGLDLHTGLLLLLALAFVLF) threads the bilayer. The Cytoplasmic segment spans residues 26 to 51 (YEAINGFHDTANAVATVIYTRAMRSQ). Residues 52–72 (LAVVMAAVFNFLGVLLGGLSV) form a helical membrane-spanning segment. The Periplasmic portion of the chain corresponds to 73–93 (AYAIVHMLPTDLLLNMGSSHG). A helical membrane pass occupies residues 94–114 (LAMVFSMLLAAIIWNLGTWYF). Residues 115–123 (GLPASSSHT) lie on the Cytoplasmic side of the membrane. The chain crosses the membrane as a helical span at residues 124–144 (LIGAIIGIGLTNALMTGTSVV). Over 145-154 (DALNIPKVLS) the chain is Periplasmic. The helical transmembrane segment at 155 to 175 (IFGSLIVSPIVGLVFAGGLIF) threads the bilayer. Over 176 to 206 (LLRRYWSGTKKRARIHLTPAEREKKDGKKKP) the chain is Cytoplasmic. A helical transmembrane segment spans residues 207–227 (PFWTRIALILSAIGVAFSHGA). Residues 228 to 232 (NDGQK) lie on the Periplasmic side of the membrane. A helical transmembrane segment spans residues 233 to 253 (GIGLVMLVLIGVAPAGFVVNM). Residues 254 to 381 (NATGYEITRT…KSDMLSTIEY (128 aa)) lie on the Cytoplasmic side of the membrane. The helical transmembrane segment at 382 to 402 (APVWIIMAVALALGIGTMIGW) threads the bilayer. Residues 403–429 (RRVATTIGEKIGKKGMTYAQGMSAQMT) are Periplasmic-facing. Residues 430-450 (AAVSIGLASYTGMPVSTTHVL) form a helical membrane-spanning segment. Residues 451 to 472 (SSSVAGTMVVDGGGLQRKTVTS) are Cytoplasmic-facing. Residues 473 to 493 (ILMAWVFTLPAAVLLSGGLYW) traverse the membrane as a helical segment. The Periplasmic portion of the chain corresponds to 494-499 (LSLQFL).

It belongs to the inorganic phosphate transporter (PiT) (TC 2.A.20) family. Pit subfamily.

Its subcellular location is the cell inner membrane. The catalysed reaction is phosphate(in) + H(+)(in) = phosphate(out) + H(+)(out). In terms of biological role, low-affinity inorganic phosphate transporter. The protein is Low-affinity inorganic phosphate transporter PitA (pitA) of Escherichia coli O157:H7.